The following is a 150-amino-acid chain: Snaclec rhinocetin subunit beta (150 aa).

A signal peptide spans 1-23 (MGRFIFLSSGLLVVFLSLSGTGA). Disulfide bonds link C27/C38, C55/C144, and C121/C136. Residues 34–145 (YEGYCYKVFK…CNRQQYFVCK (112 aa)) form the C-type lectin domain.

The protein belongs to the snaclec family. In terms of assembly, heterodimer; disulfide-linked. As to expression, expressed by the venom gland.

The protein localises to the secreted. Its function is as follows. Antagonist of the alpha-2 subunit of the integrin alpha-2/beta-1 (ITGA2/ITGB1) on human platelets and endothelial cells. This protein inhibits collagen-stimulated activation of human platelets in a dose-dependent manner. In addition, it antagonizes the binding of monoclonal antibodies against the alpha-2 subunit of integrin alpha-2/beta-1 to platelets and it coimmunoprecipitates with this integrin. The protein is Snaclec rhinocetin subunit beta of Bitis rhinoceros (West African gaboon viper).